Here is a 171-residue protein sequence, read N- to C-terminus: Protein TraV (171 aa).

The first 18 residues, Met-1–Gly-18, serve as a signal peptide directing secretion. Cys-19 carries the N-palmitoyl cysteine lipid modification. Cys-19 is lipidated: S-diacylglycerol cysteine.

Its subcellular location is the cell outer membrane. In terms of biological role, involved in F pilus assembly. Appears to facilitate the polymerization of inner membrane-located pilin subunits into extracellular F pilus filaments. In Escherichia coli (strain K12), this protein is Protein TraV (traV).